A 255-amino-acid chain; its full sequence is Acetylglutamate kinase (255 aa).

Residues 40 to 41, Arg62, and Asn153 contribute to the substrate site; that span reads GG.

This sequence belongs to the acetylglutamate kinase family. ArgB subfamily.

Its subcellular location is the cytoplasm. The enzyme catalyses N-acetyl-L-glutamate + ATP = N-acetyl-L-glutamyl 5-phosphate + ADP. Its pathway is amino-acid biosynthesis; L-arginine biosynthesis; N(2)-acetyl-L-ornithine from L-glutamate: step 2/4. Its function is as follows. Catalyzes the ATP-dependent phosphorylation of N-acetyl-L-glutamate. The chain is Acetylglutamate kinase from Bacillus cereus (strain AH820).